A 448-amino-acid chain; its full sequence is ATP-dependent protease ATPase subunit HslU (448 aa).

Residues valine 21, 63-68 (GVGKTE), aspartate 261, glutamate 326, and arginine 398 each bind ATP.

It belongs to the ClpX chaperone family. HslU subfamily. In terms of assembly, a double ring-shaped homohexamer of HslV is capped on each side by a ring-shaped HslU homohexamer. The assembly of the HslU/HslV complex is dependent on binding of ATP.

The protein localises to the cytoplasm. Its function is as follows. ATPase subunit of a proteasome-like degradation complex; this subunit has chaperone activity. The binding of ATP and its subsequent hydrolysis by HslU are essential for unfolding of protein substrates subsequently hydrolyzed by HslV. HslU recognizes the N-terminal part of its protein substrates and unfolds these before they are guided to HslV for hydrolysis. This is ATP-dependent protease ATPase subunit HslU from Persephonella marina (strain DSM 14350 / EX-H1).